An 81-amino-acid polypeptide reads, in one-letter code: Small ribosomal subunit protein bS16 (81 aa).

This sequence belongs to the bacterial ribosomal protein bS16 family.

This is Small ribosomal subunit protein bS16 from Caldicellulosiruptor bescii (strain ATCC BAA-1888 / DSM 6725 / KCTC 15123 / Z-1320) (Anaerocellum thermophilum).